The sequence spans 382 residues: Ribonuclease D (382 aa).

Residues 4–169 (ITTTAELASV…DVFAALDADL (166 aa)) enclose the 3'-5' exonuclease domain. One can recognise an HRDC domain in the interval 208–289 (KPKDLAVMME…QRGLARDPRE (82 aa)).

The protein belongs to the RNase D family. A divalent metal cation serves as cofactor.

It is found in the cytoplasm. It carries out the reaction Exonucleolytic cleavage that removes extra residues from the 3'-terminus of tRNA to produce 5'-mononucleotides.. Its function is as follows. Exonuclease involved in the 3' processing of various precursor tRNAs. Initiates hydrolysis at the 3'-terminus of an RNA molecule and releases 5'-mononucleotides. The protein is Ribonuclease D of Nitrobacter hamburgensis (strain DSM 10229 / NCIMB 13809 / X14).